The following is a 455-amino-acid chain: Bifunctional protein GlmU (455 aa).

The interval 1-230 (MTKRNAIILA…FDESMGVNDR (230 aa)) is pyrophosphorylase. Residues 9–12 (LAAG), Lys23, Gln73, 78–79 (GT), 101–103 (SGD), Gly140, Glu155, Asn170, and Asn228 each bind UDP-N-acetyl-alpha-D-glucosamine. Residue Asp103 coordinates Mg(2+). Residue Asn228 participates in Mg(2+) binding. Positions 231–251 (VALARANKVMRNRINTHWMRE) are linker. Residues 252-455 (GVSMIDPETT…KENYAKKLPW (204 aa)) are N-acetyltransferase. Residues Arg333 and Lys351 each coordinate UDP-N-acetyl-alpha-D-glucosamine. His363 serves as the catalytic Proton acceptor. UDP-N-acetyl-alpha-D-glucosamine is bound by residues Tyr366 and Asn377. Acetyl-CoA is bound by residues 386 to 387 (NY), Ser405, Ala423, and Arg440.

The protein in the N-terminal section; belongs to the N-acetylglucosamine-1-phosphate uridyltransferase family. This sequence in the C-terminal section; belongs to the transferase hexapeptide repeat family. As to quaternary structure, homotrimer. It depends on Mg(2+) as a cofactor.

The protein resides in the cytoplasm. The catalysed reaction is alpha-D-glucosamine 1-phosphate + acetyl-CoA = N-acetyl-alpha-D-glucosamine 1-phosphate + CoA + H(+). The enzyme catalyses N-acetyl-alpha-D-glucosamine 1-phosphate + UTP + H(+) = UDP-N-acetyl-alpha-D-glucosamine + diphosphate. It functions in the pathway nucleotide-sugar biosynthesis; UDP-N-acetyl-alpha-D-glucosamine biosynthesis; N-acetyl-alpha-D-glucosamine 1-phosphate from alpha-D-glucosamine 6-phosphate (route II): step 2/2. It participates in nucleotide-sugar biosynthesis; UDP-N-acetyl-alpha-D-glucosamine biosynthesis; UDP-N-acetyl-alpha-D-glucosamine from N-acetyl-alpha-D-glucosamine 1-phosphate: step 1/1. Its pathway is bacterial outer membrane biogenesis; LPS lipid A biosynthesis. Catalyzes the last two sequential reactions in the de novo biosynthetic pathway for UDP-N-acetylglucosamine (UDP-GlcNAc). The C-terminal domain catalyzes the transfer of acetyl group from acetyl coenzyme A to glucosamine-1-phosphate (GlcN-1-P) to produce N-acetylglucosamine-1-phosphate (GlcNAc-1-P), which is converted into UDP-GlcNAc by the transfer of uridine 5-monophosphate (from uridine 5-triphosphate), a reaction catalyzed by the N-terminal domain. The polypeptide is Bifunctional protein GlmU (Limosilactobacillus reuteri (strain DSM 20016) (Lactobacillus reuteri)).